Here is a 2567-residue protein sequence, read N- to C-terminus: Highly reducing polyketide synthase sor1 (2567 aa).

Positions 14 to 436 (SEPIAIIGMS…GANAHIILED (423 aa)) constitute a Ketosynthase family 3 (KS3) domain. Residues cysteine 187, histidine 322, and histidine 359 each act as for beta-ketoacyl synthase activity in the active site. Residues 550–841 (VFTGQGAQWW…VVEVGPHTAL (292 aa)) form a malonyl-CoA:ACP transacylase (MAT) domain region. The interval 939 to 1079 (HHLLGSLVEG…GLISIEFEAS (141 aa)) is N-terminal hotdog fold. A dehydratase (DH) domain region spans residues 939-1249 (HHLLGSLVEG…GFSYQSLGRS (311 aa)). The PKS/mFAS DH domain maps to 939-1252 (HHLLGSLVEG…YQSLGRSVSL (314 aa)). Histidine 971 serves as the catalytic Proton acceptor; for dehydratase activity. The C-terminal hotdog fold stretch occupies residues 1095 to 1252 (YKRQIPPAQL…YQSLGRSVSL (158 aa)). Aspartate 1161 acts as the Proton donor; for dehydratase activity in catalysis. The segment at 1426 to 1534 (LEIGASTGGI…RSLLKPGGTL (109 aa)) is methyltransferase (CMet) domain. The interval 1852 to 2163 (FLPELLVFGD…TEEETGKRVL (312 aa)) is enoyl reductase (ER) domain. The interval 2187–2369 (ASYLIVGGNG…AVSIDLSLVD (183 aa)) is ketoreductase (KR) domain. The 78-residue stretch at 2481–2558 (EAISVVGSAV…QLVANVVDRS (78 aa)) folds into the Carrier domain. An O-(pantetheine 4'-phosphoryl)serine modification is found at serine 2518.

It functions in the pathway secondary metabolite biosynthesis. Functionally, highly reducing polyketide synthase; part of the SOR gene cluster that mediates the biosynthesis of sorbicillinoids, a diverse group of yellow secondary metabolites that restrict growth of competing pathogenic fungi but not of bacteria. Sorbicillinoids biosynthesis requires the action of two PKSs. The SOR cluster is required for the production of trichodimerol and dihydrotrichotetronin, with sor2 being sufficient for production of trichodimerol, but not dihydrotrichotetronin in the light. Sor1 iteratively combines three acetyl units and the growing chain is modified by the ketoacyl reductase subunit, and optional by the enoyl reductase subunit in the second cycle. The polyketide is then handed over to the PKS sor2, which adds three more acetyl units, and two methyl groups. Sor2 releases an aldehyde, which undergoes spontaneous cyclization resulting in the formation of sorbicillin or 2',3'-dihydrosorbicillin. The monooxygenase sor5 oxidizes sorbicillin and 2',3'-dihydrosorbicillin to 2',3'-dihydrosorbicillinol and sorbicillinol, respectively. The oxidoreductase sor8 further converts sorbicillinol into oxosorbicillinol. Sorbicillinol is the building block for the other sorbicillinoids such as disorbicillinol, bisvertinolon, dihydrobisvertinolone, and dihydrotrichotetronine. The protein is Highly reducing polyketide synthase sor1 of Hypocrea jecorina (strain QM6a) (Trichoderma reesei).